Consider the following 311-residue polypeptide: Heme A synthase (311 aa).

Residues 1–6 (MQRFIK) are Cytoplasmic-facing. A helical transmembrane segment spans residues 7–27 (WLAVITSLDLLIVLLGGALVT). Over 28 to 62 (KTGSGQGCGKSWPLCNGEFVPSNLSMETIIELSHR) the chain is Extracellular. Cysteines 35 and 42 form a disulfide. Glutamate 58 is a catalytic residue. Residue histidine 61 coordinates heme o. A helical membrane pass occupies residues 63–83 (LTSGSAGILVTLLCILSWKYY). Residues 84–91 (KHVRETKT) are Cytoplasmic-facing. Residues 92–112 (LAILSFVFLVAQALMGAAAVV) traverse the membrane as a helical segment. At 113-121 (WGQMPAVLA) the chain is on the extracellular side. Residues 122–142 (IHFGISLISFASVILLTCLIF) form a helical membrane-spanning segment. Position 123 (histidine 123) interacts with heme o. Over 143–159 (EIDQKFDARSLIMDKKM) the chain is Cytoplasmic. A helical transmembrane segment spans residues 160–180 (KFHIYGVTIYSYIVVYTGALV). Over 181 to 211 (RHERASLACPDFPLCSKNRPMPTQLHEWVQM) the chain is Extracellular. Cysteine 189 and cysteine 195 are oxidised to a cystine. The helical transmembrane segment at 212–232 (GHRVAAMLIFAWILYAMILAI) threads the bilayer. Histidine 213 is a heme b binding site. Topologically, residues 233 to 243 (RHYKQQPVVYW) are cytoplasmic. Residues 244–264 (GWIISFILVTLQAIVGILVVF) traverse the membrane as a helical segment. The Extracellular segment spans residues 265 to 271 (TNASLSM). The helical transmembrane segment at 272 to 292 (ALLHSLFISCLFAVLCYLVML) threads the bilayer. Heme b is bound at residue histidine 275. Topologically, residues 293 to 311 (GTRSKVNAKEAASISKQTK) are cytoplasmic.

The protein belongs to the COX15/CtaA family. Type 1 subfamily. Interacts with CtaB. It depends on heme b as a cofactor.

Its subcellular location is the cell membrane. It carries out the reaction Fe(II)-heme o + 2 A + H2O = Fe(II)-heme a + 2 AH2. Its pathway is porphyrin-containing compound metabolism; heme A biosynthesis; heme A from heme O: step 1/1. In terms of biological role, catalyzes the conversion of heme O to heme A by two successive hydroxylations of the methyl group at C8. The first hydroxylation forms heme I, the second hydroxylation results in an unstable dihydroxymethyl group, which spontaneously dehydrates, resulting in the formyl group of heme A. This chain is Heme A synthase, found in Bacillus cereus (strain AH187).